Consider the following 240-residue polypeptide: 2,3-bisphosphoglycerate-dependent phosphoglycerate mutase 2 (240 aa).

Substrate-binding positions include 8–15 (RHGQSEWN), 21–22 (TG), R60, 87–90 (ERHY), K98, 114–115 (RR), and 183–184 (GN). The Tele-phosphohistidine intermediate role is filled by H9. E87 functions as the Proton donor/acceptor in the catalytic mechanism.

The protein belongs to the phosphoglycerate mutase family. BPG-dependent PGAM subfamily.

The catalysed reaction is (2R)-2-phosphoglycerate = (2R)-3-phosphoglycerate. Its pathway is carbohydrate degradation; glycolysis; pyruvate from D-glyceraldehyde 3-phosphate: step 3/5. Catalyzes the interconversion of 2-phosphoglycerate and 3-phosphoglycerate. The protein is 2,3-bisphosphoglycerate-dependent phosphoglycerate mutase 2 of Bacillus cereus (strain ATCC 10987 / NRS 248).